The following is a 72-amino-acid chain: Translation initiation factor IF-1 2 (72 aa).

The 72-residue stretch at 1–72 (MAKEDVIEMQ…TKGRIVFRTK (72 aa)) folds into the S1-like domain.

This sequence belongs to the IF-1 family. Component of the 30S ribosomal translation pre-initiation complex which assembles on the 30S ribosome in the order IF-2 and IF-3, IF-1 and N-formylmethionyl-tRNA(fMet); mRNA recruitment can occur at any time during PIC assembly.

It is found in the cytoplasm. In terms of biological role, one of the essential components for the initiation of protein synthesis. Stabilizes the binding of IF-2 and IF-3 on the 30S subunit to which N-formylmethionyl-tRNA(fMet) subsequently binds. Helps modulate mRNA selection, yielding the 30S pre-initiation complex (PIC). Upon addition of the 50S ribosomal subunit IF-1, IF-2 and IF-3 are released leaving the mature 70S translation initiation complex. The protein is Translation initiation factor IF-1 2 of Azoarcus sp. (strain BH72).